A 227-amino-acid chain; its full sequence is Prolactin (227 aa).

Positions M1 to P28 are cleaved as a signal peptide. Residues C32 and C39 are joined by a disulfide bond. S54 bears the Phosphoserine mark. N59 carries an N-linked (GlcNAc...) asparagine glycan. A phosphoserine mark is found at S62 and S118. 2 disulfide bridges follow: C86–C202 and C219–C227.

Belongs to the somatotropin/prolactin family. In terms of assembly, interacts with PRLR.

It localises to the secreted. Functionally, prolactin acts primarily on the mammary gland by promoting lactation. The chain is Prolactin (PRL) from Macaca mulatta (Rhesus macaque).